The chain runs to 67 residues: MIIPIRCFTCGKVIGDKWETYLGFLQSEYSEGDALDALGLRRYCCRRMLLAHVDLIEKLLNYHPLEK.

Zn(2+) contacts are provided by cysteine 7, cysteine 10, cysteine 44, and cysteine 45.

This sequence belongs to the archaeal Rpo10/eukaryotic RPB10 RNA polymerase subunit family. Component of the RNA polymerase I (Pol I), RNA polymerase II (Pol II) and RNA polymerase III (Pol III) complexes consisting of at least 13, 12 and 17 subunits, respectively.

The protein resides in the nucleus. DNA-dependent RNA polymerase catalyzes the transcription of DNA into RNA using the four ribonucleoside triphosphates as substrates. Common component of RNA polymerases I, II and III which synthesize ribosomal RNA precursors, mRNA precursors and many functional non-coding RNAs, and a small RNAs, such as 5S rRNA and tRNAs, respectively. Pol II is the central component of the basal RNA polymerase II transcription machinery. Pols are composed of mobile elements that move relative to each other. In Pol II, RBP10 is part of the core element with the central large cleft. This Caenorhabditis briggsae protein is DNA-directed RNA polymerases I, II, and III subunit RPABC5.